The chain runs to 111 residues: uncharacterized protein (111 aa).

Transmembrane regions (helical) follow at residues 7–27 (ILNI…SMMI) and 53–73 (AFAM…TFLH).

It localises to the cell membrane. This is an uncharacterized protein from Bacillus anthracis.